We begin with the raw amino-acid sequence, 315 residues long: 4-hydroxy-3-methylbut-2-enyl diphosphate reductase (315 aa).

Cysteine 12 contributes to the [4Fe-4S] cluster binding site. The (2E)-4-hydroxy-3-methylbut-2-enyl diphosphate site is built by histidine 41 and histidine 74. Residues histidine 41 and histidine 74 each coordinate dimethylallyl diphosphate. Residues histidine 41 and histidine 74 each coordinate isopentenyl diphosphate. Position 96 (cysteine 96) interacts with [4Fe-4S] cluster. Histidine 124 is a (2E)-4-hydroxy-3-methylbut-2-enyl diphosphate binding site. Histidine 124 lines the dimethylallyl diphosphate pocket. Residue histidine 124 coordinates isopentenyl diphosphate. Glutamate 126 acts as the Proton donor in catalysis. Threonine 168 lines the (2E)-4-hydroxy-3-methylbut-2-enyl diphosphate pocket. Cysteine 198 contacts [4Fe-4S] cluster. (2E)-4-hydroxy-3-methylbut-2-enyl diphosphate is bound by residues serine 226, serine 227, asparagine 228, and serine 270. Positions 226, 227, 228, and 270 each coordinate dimethylallyl diphosphate. Residues serine 226, serine 227, asparagine 228, and serine 270 each coordinate isopentenyl diphosphate.

Belongs to the IspH family. It depends on [4Fe-4S] cluster as a cofactor.

The enzyme catalyses isopentenyl diphosphate + 2 oxidized [2Fe-2S]-[ferredoxin] + H2O = (2E)-4-hydroxy-3-methylbut-2-enyl diphosphate + 2 reduced [2Fe-2S]-[ferredoxin] + 2 H(+). It carries out the reaction dimethylallyl diphosphate + 2 oxidized [2Fe-2S]-[ferredoxin] + H2O = (2E)-4-hydroxy-3-methylbut-2-enyl diphosphate + 2 reduced [2Fe-2S]-[ferredoxin] + 2 H(+). It participates in isoprenoid biosynthesis; dimethylallyl diphosphate biosynthesis; dimethylallyl diphosphate from (2E)-4-hydroxy-3-methylbutenyl diphosphate: step 1/1. The protein operates within isoprenoid biosynthesis; isopentenyl diphosphate biosynthesis via DXP pathway; isopentenyl diphosphate from 1-deoxy-D-xylulose 5-phosphate: step 6/6. Catalyzes the conversion of 1-hydroxy-2-methyl-2-(E)-butenyl 4-diphosphate (HMBPP) into a mixture of isopentenyl diphosphate (IPP) and dimethylallyl diphosphate (DMAPP). Acts in the terminal step of the DOXP/MEP pathway for isoprenoid precursor biosynthesis. This chain is 4-hydroxy-3-methylbut-2-enyl diphosphate reductase, found in Pseudomonas fluorescens (strain ATCC BAA-477 / NRRL B-23932 / Pf-5).